Consider the following 145-residue polypeptide: Probable transport accessory protein MmpS2 (145 aa).

The helical transmembrane segment at 11 to 31 (MWLLLAIVVVAVVGGLGIYRL) threads the bilayer.

It belongs to the MmpS family.

The protein resides in the cell membrane. In Mycobacterium bovis (strain ATCC BAA-935 / AF2122/97), this protein is Probable transport accessory protein MmpS2 (mmpS2).